Reading from the N-terminus, the 653-residue chain is 1-deoxy-D-xylulose-5-phosphate synthase (653 aa).

Residues His-86 and 127–129 contribute to the thiamine diphosphate site; that span reads GHS. Asp-158 lines the Mg(2+) pocket. Residues 159–160, Asn-187, and Phe-294 contribute to the thiamine diphosphate site; that span reads GA. A Mg(2+)-binding site is contributed by Asn-187. Residues 309 to 324 show a composition bias toward basic and acidic residues; sequence KLEKTTSEPPPKKEPR. The tract at residues 309-343 is disordered; the sequence is KLEKTTSEPPPKKEPRSPNAATAEPEAQPKPQPKP. Glu-395 contacts thiamine diphosphate.

Belongs to the transketolase family. DXPS subfamily. Homodimer. The cofactor is Mg(2+). Thiamine diphosphate is required as a cofactor.

It catalyses the reaction D-glyceraldehyde 3-phosphate + pyruvate + H(+) = 1-deoxy-D-xylulose 5-phosphate + CO2. It participates in metabolic intermediate biosynthesis; 1-deoxy-D-xylulose 5-phosphate biosynthesis; 1-deoxy-D-xylulose 5-phosphate from D-glyceraldehyde 3-phosphate and pyruvate: step 1/1. Functionally, catalyzes the acyloin condensation reaction between C atoms 2 and 3 of pyruvate and glyceraldehyde 3-phosphate to yield 1-deoxy-D-xylulose-5-phosphate (DXP). This is 1-deoxy-D-xylulose-5-phosphate synthase from Chromohalobacter salexigens (strain ATCC BAA-138 / DSM 3043 / CIP 106854 / NCIMB 13768 / 1H11).